The sequence spans 43 residues: Metallothionein-3 (43 aa).

The protein belongs to the metallothionein superfamily. Type 5 family.

Its function is as follows. This protein binds cations of several transition elements. Thought to be involved in metal ion homeostasis. The polypeptide is Metallothionein-3 (MtnC) (Drosophila melanogaster (Fruit fly)).